A 257-amino-acid polypeptide reads, in one-letter code: tRNA uridine(34) hydroxylase (257 aa).

In terms of domain architecture, Rhodanese spans 128 to 222; the sequence is NGRRLVMLDA…YFEQVGGEGY (95 aa). Cys-182 serves as the catalytic Cysteine persulfide intermediate.

This sequence belongs to the TrhO family.

The enzyme catalyses uridine(34) in tRNA + AH2 + O2 = 5-hydroxyuridine(34) in tRNA + A + H2O. Functionally, catalyzes oxygen-dependent 5-hydroxyuridine (ho5U) modification at position 34 in tRNAs. This Xylella fastidiosa (strain 9a5c) protein is tRNA uridine(34) hydroxylase.